We begin with the raw amino-acid sequence, 948 residues long: Hexagonally packed intermediate-layer surface protein (948 aa).

A signal peptide spans 1-17; it reads MKKNIALMALTGILTLA. 2 disulfides stabilise this stretch: cysteine 168–cysteine 187 and cysteine 554–cysteine 666.

Post-translationally, glycosylated. Contains tightly bound reducing sugars (six per polypeptide chain) and fatty acids (covalently bound and located in the N-terminal region).

The protein resides in the secreted. It is found in the cell wall. The protein localises to the S-layer. In terms of biological role, shape maintenance, possible protection from noxious enzymes or exogenous and unsettling DNA, and may mediate homotypic cell-cell contacts. The protein is Hexagonally packed intermediate-layer surface protein (hpi) of Deinococcus radiodurans (strain ATCC 13939 / DSM 20539 / JCM 16871 / CCUG 27074 / LMG 4051 / NBRC 15346 / NCIMB 9279 / VKM B-1422 / R1).